We begin with the raw amino-acid sequence, 388 residues long: Outer membrane protein assembly factor BamB (388 aa).

Residues 1–17 form the signal peptide; it reads MVLSLLSVMLLSGYKFL.

The protein belongs to the BamB family. Part of the Bam complex, which is composed of the outer membrane protein BamA, and four lipoproteins BamB, BamC, BamD and BamE.

The protein resides in the cell outer membrane. Its function is as follows. Part of the outer membrane protein assembly complex, which is involved in assembly and insertion of beta-barrel proteins into the outer membrane. The chain is Outer membrane protein assembly factor BamB from Moranella endobia (strain PCIT).